The chain runs to 204 residues: Holliday junction branch migration complex subunit RuvA (204 aa).

A domain I region spans residues 1–63 (MIGWLQGRVL…EDGQFLYGFS (63 aa)). Residues 64–142 (SFLQRQLFRE…KNDLFLCDES (79 aa)) form a domain II region. A flexible linker region spans residues 143 to 152 (ESSRAPIALS). Residues 152–204 (SASEEAIQALIALELAPAEAELWVKKAQKTLAEDADSAALIKTAFALRLQGAK) are domain III.

It belongs to the RuvA family. Homotetramer. Forms an RuvA(8)-RuvB(12)-Holliday junction (HJ) complex. HJ DNA is sandwiched between 2 RuvA tetramers; dsDNA enters through RuvA and exits via RuvB. An RuvB hexamer assembles on each DNA strand where it exits the tetramer. Each RuvB hexamer is contacted by two RuvA subunits (via domain III) on 2 adjacent RuvB subunits; this complex drives branch migration. In the full resolvosome a probable DNA-RuvA(4)-RuvB(12)-RuvC(2) complex forms which resolves the HJ.

It localises to the cytoplasm. Its function is as follows. The RuvA-RuvB-RuvC complex processes Holliday junction (HJ) DNA during genetic recombination and DNA repair, while the RuvA-RuvB complex plays an important role in the rescue of blocked DNA replication forks via replication fork reversal (RFR). RuvA specifically binds to HJ cruciform DNA, conferring on it an open structure. The RuvB hexamer acts as an ATP-dependent pump, pulling dsDNA into and through the RuvAB complex. HJ branch migration allows RuvC to scan DNA until it finds its consensus sequence, where it cleaves and resolves the cruciform DNA. The chain is Holliday junction branch migration complex subunit RuvA from Dichelobacter nodosus (strain VCS1703A).